The sequence spans 215 residues: Redox-sensing transcriptional repressor Rex 2 (215 aa).

A DNA-binding region (H-T-H motif) is located at residues 15 to 54 (VYLRYLKMLGDSGVKRIKSREFSEMIQIPSATIRRDFSHV). 89–94 (GCGNLG) is a binding site for NAD(+).

Belongs to the transcriptional regulatory Rex family. Homodimer.

It is found in the cytoplasm. Modulates transcription in response to changes in cellular NADH/NAD(+) redox state. This Enterococcus faecalis (strain ATCC 700802 / V583) protein is Redox-sensing transcriptional repressor Rex 2.